The following is a 358-amino-acid chain: Peptide chain release factor 1 (358 aa).

An N5-methylglutamine modification is found at Q233.

Belongs to the prokaryotic/mitochondrial release factor family. Methylated by PrmC. Methylation increases the termination efficiency of RF1.

The protein resides in the cytoplasm. Functionally, peptide chain release factor 1 directs the termination of translation in response to the peptide chain termination codons UAG and UAA. This chain is Peptide chain release factor 1, found in Macrococcus caseolyticus (strain JCSC5402) (Macrococcoides caseolyticum).